We begin with the raw amino-acid sequence, 207 residues long: B2 protein (207 aa).

Residues 1–68 (MIDQEESNFN…FKTLPPAESL (68 aa)) are disordered. Low complexity-rich tracts occupy residues 8–26 (NFNFNFNQPQQPQQQQFHG) and 35–52 (KNNNNNSESGNKNGGENK). Residues 72-204 (ETVGGYIFVC…AISLLDIFEE (133 aa)) form the DCD domain.

The chain is B2 protein from Daucus carota (Wild carrot).